A 700-amino-acid chain; its full sequence is Elongation factor G (700 aa).

Residues 8-290 (ERYRNIGISA…AVIDYLPAPT (283 aa)) enclose the tr-type G domain. GTP-binding positions include 17–24 (AHIDAGKT), 88–92 (DTPGH), and 142–145 (NKMD).

It belongs to the TRAFAC class translation factor GTPase superfamily. Classic translation factor GTPase family. EF-G/EF-2 subfamily.

The protein localises to the cytoplasm. Catalyzes the GTP-dependent ribosomal translocation step during translation elongation. During this step, the ribosome changes from the pre-translocational (PRE) to the post-translocational (POST) state as the newly formed A-site-bound peptidyl-tRNA and P-site-bound deacylated tRNA move to the P and E sites, respectively. Catalyzes the coordinated movement of the two tRNA molecules, the mRNA and conformational changes in the ribosome. The chain is Elongation factor G (fusA) from Pasteurella multocida (strain Pm70).